The chain runs to 582 residues: BTB/POZ domain and ankyrin repeat-containing protein NPR1 (582 aa).

The span at 1-12 shows a compositional bias: polar residues; that stretch reads MEPPTSHVTNAF. The tract at residues 1–27 is disordered; sequence MEPPTSHVTNAFSDSDSASVEEGDADA. The 86-residue stretch at 55–140 folds into the BTB domain; sequence ADARIAVPGG…VLDYLYSGRV (86 aa). The C2HC NPR-type zinc-finger motif lies at 147 to 161; that stretch reads ACLCVDEDCAHVGCH. Residues cysteine 150, cysteine 155, histidine 157, and cysteine 160 each contribute to the Zn(2+) site. ANK repeat units follow at residues 229–258, 269–299, 301–328, and 332–361; these read RSNL…SLGL, KHVR…NLDD, FALH…DVNH, and RGYT…RPAD. A salicylic acid-binding core (SBC) region spans residues 391–526; sequence PSPKDRLCIE…VLDKIMDDET (136 aa). Arginine 436 serves as a coordination point for salicylate. 2 disordered regions span residues 525–544 and 551–582; these read ETDP…KRFH and QKAF…RPRR. Positions 553–563 are enriched in basic and acidic residues; it reads AFHEDKEENDR. A compositionally biased stretch (low complexity) spans 564–574; it reads SGLSSSSSSTS.

This sequence belongs to the plant 'ANKYRIN-BTB/POZ' family. 'NPR1-like' subfamily. In terms of assembly, oligomer in an uninduced state; disulfide-linked. Forms activated monomer upon changes in cellular redox potential. Interacts with TGA2.2. Interacts with NRR.

It localises to the cytoplasm. The protein localises to the nucleus. Its subcellular location is the nuclear body. It participates in protein modification; protein ubiquitination. In terms of biological role, salicylic acid (SA)-binding substrate-specific adapter of an E3 ubiquitin-protein ligase complex (CUL3-RBX1-BTB) which mediates the ubiquitination and subsequent proteasomal degradation of target proteins. Transcription cofactor that represses gene expression in the absence of salicylic acid (SA), when attached to negative cis-elements (W-box) with WRKY transcription factors, but stimulates gene expression upon activation by SA, when sumoylated and attached to positive cis-elements (as-1) with TGA transcription factors, thus confering immunity through a series of gene regulations ending in a significant increase in antimicrobial and defense genes expression. Key positive factor of disease resistance. Involved in defense response against the bacterial blight disease caused by Xanthomonas oryzae pv. oryzae (Xoo). Plants over-expressing NPR1/NH1 acquire high levels of resistance to Xoo, express constitutively defense genes and develop lesion-mimic spots on leaves at pre-flowering stage. Involved in basal resistance to the blast pathogen Magnaporthe oryzae. Plants over-expressing NPR1/NH1 have increased resistance to M.oryzae infection. Plays an essential role in benzothiadiazole (BTH)-induced resistance to the blast fungus disease caused by Magnaporthe oryzae. Functions as a transcriptional coactivator of TGA2.1 and LG2 in vitro. Involved in defense response against herbivore. Plants silencing NPR1/NH1 have increased herbivore-induced trypsin proteinase inhibitors and volatiles, which reduces the performance of the striped stem borer (SSB) Chilo suppressalis. This is BTB/POZ domain and ankyrin repeat-containing protein NPR1 from Oryza sativa subsp. indica (Rice).